A 425-amino-acid polypeptide reads, in one-letter code: Enolase (425 aa).

Q170 is a binding site for (2R)-2-phosphoglycerate. E214 (proton donor) is an active-site residue. 3 residues coordinate Mg(2+): D250, E291, and D317. K342, R371, S372, and K393 together coordinate (2R)-2-phosphoglycerate. Residue K342 is the Proton acceptor of the active site.

The protein belongs to the enolase family. It depends on Mg(2+) as a cofactor.

It localises to the cytoplasm. The protein resides in the secreted. Its subcellular location is the cell surface. The catalysed reaction is (2R)-2-phosphoglycerate = phosphoenolpyruvate + H2O. Its pathway is carbohydrate degradation; glycolysis; pyruvate from D-glyceraldehyde 3-phosphate: step 4/5. Functionally, catalyzes the reversible conversion of 2-phosphoglycerate (2-PG) into phosphoenolpyruvate (PEP). It is essential for the degradation of carbohydrates via glycolysis. The polypeptide is Enolase (Methanococcoides burtonii (strain DSM 6242 / NBRC 107633 / OCM 468 / ACE-M)).